The primary structure comprises 311 residues: Transmembrane protein DDB_G0273707/DDB_G0273361 (311 aa).

A disordered region spans residues 1 to 113 (MNEIEVDNLS…NNNNNKNENN (113 aa)). The N-linked (GlcNAc...) asparagine glycan is linked to Asn8. A compositionally biased stretch (polar residues) spans 9–18 (LSHTNKNVAT). 4 N-linked (GlcNAc...) asparagine glycosylation sites follow: Asn35, Asn38, Asn62, and Asn76. Composition is skewed to low complexity over residues 37–67 (SNNS…SNSN) and 76–111 (NNSN…NKNE). Positions 95 to 124 (NNNNNNNNNNNNNNKNENNNKIKNEKINIL) form a coiled coil. The next 5 membrane-spanning stretches (helical) occupy residues 150 to 170 (LEEI…LALL), 181 to 201 (IFLL…PKSP), 208 to 228 (LVLG…ALVY), 235 to 255 (VACA…KSIH), and 276 to 296 (FYYI…TALI).

The protein localises to the membrane. This chain is Transmembrane protein DDB_G0273707/DDB_G0273361, found in Dictyostelium discoideum (Social amoeba).